The primary structure comprises 153 residues: Small ribosomal subunit protein uS5 (153 aa).

The region spanning 15 to 78 (FQEVVVNIGR…DDAFKNLIHV (64 aa)) is the S5 DRBM domain.

The protein belongs to the universal ribosomal protein uS5 family. In terms of assembly, part of the 30S ribosomal subunit. Contacts proteins S4 and S8.

With S4 and S12 plays an important role in translational accuracy. Functionally, located at the back of the 30S subunit body where it stabilizes the conformation of the head with respect to the body. This is Small ribosomal subunit protein uS5 from Helicobacter pylori (strain P12).